Reading from the N-terminus, the 93-residue chain is Cell division topological specificity factor (93 aa).

This sequence belongs to the MinE family.

Prevents the cell division inhibition by proteins MinC and MinD at internal division sites while permitting inhibition at polar sites. This ensures cell division at the proper site by restricting the formation of a division septum at the midpoint of the long axis of the cell. This is Cell division topological specificity factor from Halorhodospira halophila (strain DSM 244 / SL1) (Ectothiorhodospira halophila (strain DSM 244 / SL1)).